The primary structure comprises 263 residues: Lens fiber major intrinsic protein (263 aa).

The Cytoplasmic portion of the chain corresponds to 1-9 (MWELRSASF). A helical transmembrane segment spans residues 10 to 29 (WRAIFAEFFATLFYVFFGLG). Topologically, residues 30–41 (ASLRWAPGPLHV) are extracellular. The helical transmembrane segment at 42 to 59 (LQVALAFGLALAXLVQTV) threads the bilayer. The Cytoplasmic portion of the chain corresponds to 60-61 (GH). Positions 62 to 77 (ISGAHVNPAVTFXFLV) form an intramembrane region, discontinuously helical. Residues 68–70 (NPA) carry the NPA 1 motif. At 78–82 (GSQMS) the chain is on the cytoplasmic side. The helical transmembrane segment at 83-106 (LLRAFCYMAAQLLGAVAGAAVLYS) threads the bilayer. Over 107–127 (VTPPAVRGNLALNTLHAGVSV) the chain is Extracellular. The chain crosses the membrane as a helical span at residues 128-148 (XQATTVEIFLTLQFVLCIFAT). The Cytoplasmic portion of the chain corresponds to 149–156 (YDERRNGR). Residues 157–175 (LGSVALAVGFSLTLGHLFG) form a helical membrane-spanning segment. Over 176-178 (MYY) the chain is Extracellular. An intramembrane region (discontinuously helical) is located at residues 179–193 (TGAGMNPARSFAPAI). Residues 184–186 (NPA) carry the NPA 2 motif. The Extracellular portion of the chain corresponds to 194–200 (LTRNFTN). The chain crosses the membrane as a helical span at residues 201–222 (HWVYWVGPIIGGGLGSLLYDFL). Residues 223–263 (LFPRLKSVSERLSILKGTRPSDNNGQPEGTGEPVELKTQAL) are Cytoplasmic-facing. The interaction with CALM stretch occupies residues 227-237 (LKSVSERLSIL). Residues Ser-235 and Ser-243 each carry the phosphoserine modification. The segment at 238-263 (KGTRPSDNNGQPEGTGEPVELKTQAL) is disordered. Residues Asn-245 and Asn-246 each carry the deamidated asparagine; by deterioration modification.

Belongs to the MIP/aquaporin (TC 1.A.8) family. Homotetramer; each monomer provides an independent water pore. Two homotetramers on opposing membranes can dimerize, forming a cell-cell junction. Interacts with CALM; the calcium-calmodulin/CALM complex interacts with the cytoplasmic domains of two aquaporins, leading to channel closure. Interacts with BFSP1 (via C-terminus); prevents calcium-dependent inhibition of the water channel activity. Post-translationally, subject to partial proteolytic cleavage in the eye lens core. Partial proteolysis promotes interactions between tetramers from adjoining membranes. Fatty acylated at Met-1 and Lys-238. The acyl modifications, in decreasing order of ion abundance, are: oleoyl (C18:1) &gt; palmitoyl (C16:0) &gt; stearoyl (C18:0) &gt; eicosenoyl (C20:1) &gt; dihomo-gamma-linolenoyl (C20:3) &gt; palmitoleoyl (C16:1) &gt; eicosadienoyl (C20:2). In terms of tissue distribution, detected in eye lens (at protein level).

It is found in the cell membrane. The protein localises to the cell junction. The enzyme catalyses H2O(in) = H2O(out). Its activity is regulated as follows. The water channel activity is inhibited by calcium through calmodulin/CALM. Functionally, aquaporins form homotetrameric transmembrane channels, with each monomer independently mediating water transport across the plasma membrane along its osmotic gradient. Specifically expressed in lens fiber cells, this aquaporin is crucial for maintaining lens water homeostasis and transparency. Beyond water permeability, it also acts as a cell-to-cell adhesion molecule, forming thin junctions between lens fiber cells that are essential for maintaining the ordered structure and transparency of the lens. The polypeptide is Lens fiber major intrinsic protein (Cavia porcellus (Guinea pig)).